The primary structure comprises 849 residues: Villin-1 (849 aa).

Gelsolin-like repeat units lie at residues 30 to 107 (IEKS…DKFL), 147 to 213 (RVTE…EDGK), 262 to 335 (VPVE…TVEF), 405 to 475 (QEQL…PEMF), and 527 to 566 (AIQV…DHNL). Positions 739–849 (ETPERSLRKS…AVATGTPRRR (111 aa)) are disordered. Low complexity-rich tracts occupy residues 747 to 782 (KSSS…SAST) and 791 to 823 (PAAL…STPS).

This sequence belongs to the villin/gelsolin family. In terms of tissue distribution, expressed in roots, young leaves, and inflorescences, mostly in the vasculature of roots, leaves, and filaments of the anthers. Also detected in guard cells.

The protein localises to the cytoplasm. The protein resides in the cytoskeleton. Its function is as follows. Ca(2+)-independent actin-binding protein. Binds actin microfilaments (MFs). Involved in actin filament bundling, severing and capping. Caps the barbed end of actin filaments and protects them from disassembly. Promotes VLN3-mediated MF severing. This chain is Villin-1, found in Oryza sativa subsp. japonica (Rice).